Reading from the N-terminus, the 570-residue chain is NADPH oxidase 2 (570 aa).

The Cytoplasmic segment spans residues 2-9; the sequence is GNWAVNEG. Residues 10–36 form a helical membrane-spanning segment; sequence LSIFVILVWLGLNVFLFINYYKVYDDG. Topologically, residues 37-46 are extracellular; sequence PKYNYTRKLL. The N-linked (GlcNAc...) asparagine glycan is linked to asparagine 40. A helical transmembrane segment spans residues 47-72; that stretch reads GSALALARAPAACLNFNCMLILLPVC. Residues 54–286 form the Ferric oxidoreductase domain; it reads RAPAACLNFN…MFLYLCERLV (233 aa). The Cytoplasmic segment spans residues 73-95; the sequence is RNLLSFLRGSSACCSTRIRRQLD. Residues 96-130 form a helical membrane-spanning segment; sequence RNLTFHKMVAWMIALHTAIHTIAHLFNVEWCVNAR. Residues histidine 101 and histidine 115 each contribute to the heme b site. The Extracellular segment spans residues 131-163; the sequence is VGISDRYSIALSDIGDNENEEYLNFAREKIKNP. Residues lysine 159 and lysine 161 each participate in a glycyl lysine isopeptide (Lys-Gly) (interchain with G-Cter in ubiquitin) cross-link. A helical transmembrane segment spans residues 164–194; that stretch reads EGGLYVAVTRLAGITGIVITLCLILIITSST. Topologically, residues 195–203 are cytoplasmic; it reads KTIRRSYFE. Positions 199 and 200 each coordinate FAD. The chain crosses the membrane as a helical span at residues 204-222; the sequence is VFWYTHHLFVIFFIGLAIH. Tryptophan 206, histidine 209, histidine 222, arginine 226, and isoleucine 227 together coordinate heme b. Residues 223–267 lie on the Extracellular side of the membrane; sequence GAERIVRGQTAESLEEHNLDICADKIEEWGKIKECPVPKFAGNPP. Lysine 255 participates in a covalent cross-link: Glycyl lysine isopeptide (Lys-Gly) (interchain with G-Cter in ubiquitin). Residues methionine 268, tyrosine 280, and arginine 287 each coordinate heme b. The chain crosses the membrane as a helical span at residues 268 to 285; sequence MTWKWIVGPMFLYLCERL. Residues 286 to 570 lie on the Cytoplasmic side of the membrane; the sequence is VRFWRSQQKV…VHFIFNKENF (285 aa). The 111-residue stretch at 287–397 folds into the FAD-binding FR-type domain; that stretch reads RFWRSQQKVV…DGPFGTASED (111 aa). Glycyl lysine isopeptide (Lys-Gly) (interchain with G-Cter in ubiquitin) cross-links involve residues lysine 294, lysine 299, lysine 306, lysine 328, and lysine 334. FAD-binding residues include tryptophan 337, histidine 338, proline 339, threonine 341, histidine 354, arginine 356, tryptophan 361, and threonine 362. Lysine 381 participates in a covalent cross-link: Glycyl lysine isopeptide (Lys-Gly) (interchain with G-Cter in ubiquitin). Isoleucine 411, arginine 446, and threonine 481 together coordinate NADPH. Residue lysine 506 forms a Glycyl lysine isopeptide (Lys-Gly) (interchain with G-Cter in ubiquitin) linkage. NADPH is bound at residue arginine 513. Lysine 567 is covalently cross-linked (Glycyl lysine isopeptide (Lys-Gly) (interchain with G-Cter in ubiquitin)).

In terms of assembly, component of the phagocyte NADPH oxidase core complex/cytochrome b558 complex, composed of CYBB (heavy chain (beta)) and CYBA (light chain (alpha)). Component of the phagocyte NADPH oxidase complex composed of an obligatory core heterodimer formed by the membrane proteins CYBA and CYBB and the cytosolic regulatory subunits NCF1/p47-phox, NCF2/p67-phox, NCF4/p40-phox and the small GTPase RAC1 or RAC2. Interacts with NCF1 (phosphorylated form). Interacts with NCF2; the interaction is enhanced in the presence of GBP7. Interacts with RAC2. Interacts with RAC1. Interacts with calprotectin (S100A8/9). Interacts with NRROS; the interaction is direct and impairs formation of a stable NADPH oxidase complex. Interacts with CYBC1; CYBC1 may act as a chaperone stabilizing Cytochrome b-245 heterodimer. The CYBA:CYBB complex interacts with GBP7. Requires FAD as cofactor. In terms of processing, glycosylated. Post-translationally, phosphorylated on Ser and Thr residues by PKC during neutrophils activation. Phosphorylation enhances the NADPH oxidase activity and stimulates its interaction with RAC2, NCF2/p67-phox, and NCF1/p47-phox. Undergoes 'Lys-48'-linked polyubiquitination, likely by RNF145, triggering endoplasmic reticulum-associated degradation.

It is found in the cell membrane. It catalyses the reaction NADPH + 2 O2 = 2 superoxide + NADP(+) + H(+). Its function is as follows. Catalytic subunit of the phagocyte NADPH oxidase complex that mediates the transfer of electrons from cytosolic NADPH to O2 to produce the superoxide anion (O2(-)). In the activated complex, electrons are first transferred from NADPH to flavin adenine dinucleotide (FAD) and subsequently transferred via two heme molecules to molecular oxygen, producing superoxide through an outer-sphere reaction. Activation of the NADPH oxidase complex is initiated by the assembly of cytosolic subunits of the NADPH oxidase complex with the core NADPH oxidase complex to form a complex at the plasma membrane or phagosomal membrane. This activation process is initiated by phosphorylation dependent binding of the cytosolic NCF1/p47-phox subunit to the C-terminus of CYBA/p22-phox. NADPH oxidase complex assembly is impaired through interaction with NRROS. The polypeptide is NADPH oxidase 2 (Mus musculus (Mouse)).